The following is a 61-amino-acid chain: Small ribosomal subunit protein uS14 (61 aa).

Residues Cys-24, Cys-27, Cys-40, and Cys-43 each coordinate Zn(2+).

Belongs to the universal ribosomal protein uS14 family. Zinc-binding uS14 subfamily. Part of the 30S ribosomal subunit. Contacts proteins S3 and S10. Zn(2+) serves as cofactor.

Functionally, binds 16S rRNA, required for the assembly of 30S particles and may also be responsible for determining the conformation of the 16S rRNA at the A site. The chain is Small ribosomal subunit protein uS14 from Syntrophus aciditrophicus (strain SB).